The sequence spans 547 residues: Chaperonin GroEL (547 aa).

ATP is bound by residues 30–33 (TLGP), K51, 87–91 (DGTTT), G415, and D496.

This sequence belongs to the chaperonin (HSP60) family. Forms a cylinder of 14 subunits composed of two heptameric rings stacked back-to-back. Interacts with the co-chaperonin GroES.

It is found in the cytoplasm. The catalysed reaction is ATP + H2O + a folded polypeptide = ADP + phosphate + an unfolded polypeptide.. In terms of biological role, together with its co-chaperonin GroES, plays an essential role in assisting protein folding. The GroEL-GroES system forms a nano-cage that allows encapsulation of the non-native substrate proteins and provides a physical environment optimized to promote and accelerate protein folding. The protein is Chaperonin GroEL of Actinobacillus pleuropneumoniae (Haemophilus pleuropneumoniae).